Here is a 66-residue protein sequence, read N- to C-terminus: Small vasohibin-binding protein (66 aa).

A compositionally biased stretch (basic and acidic residues) spans 1-23 (MDPPARKEKSKVKEPAFRVEKAK). Residues 1 to 30 (MDPPARKEKSKVKEPAFRVEKAKQKSAQQE) are disordered. Residues 5–52 (ARKEKSKVKEPAFRVEKAKQKSAQQELKQRQRAEIYALNRVMTELEQQ) adopt a coiled-coil conformation.

It belongs to the SVBP family. In terms of assembly, interacts with VASH1 and VASH2. In terms of tissue distribution, highly expressed in bone marrow, spleen and testis.

It is found in the cytoplasm. It localises to the secreted. The protein resides in the cytoskeleton. In terms of biological role, enhances the tyrosine carboxypeptidase activity of VASH1 and VASH2, thereby promoting the removal of the C-terminal tyrosine residue of alpha-tubulin. Also required to enhance the solubility and secretion of VASH1 and VASH2. Plays a role in axon and excitatory synapse formation. This Mus musculus (Mouse) protein is Small vasohibin-binding protein.